Consider the following 1154-residue polypeptide: PDZ domain-containing protein 8 (1154 aa).

A helical transmembrane segment spans residues 2–24 (GLLLMILASAVLGSFLTLLAQFF). Positions 66-90 (DEEPSGAAPEGGATPTAAPETPAPP) are disordered. The span at 70–85 (SGAAPEGGATPTAAPE) shows a compositional bias: low complexity. The 204-residue stretch at 91–294 (TRETCYFLNA…LPNYKIRFKP (204 aa)) folds into the SMP-LTD domain. Residues 366 to 449 (TVELIKGNLQ…RVLVYYERPV (84 aa)) enclose the PDZ domain. Ser-496, Ser-521, and Ser-538 each carry phosphoserine. The tract at residues 548-612 (GSHPLPPKIQ…SADAPNQAEP (65 aa)) is disordered. The Phorbol-ester/DAG-type zinc finger occupies 840–891 (KHSFQDTQFQNPTWCDYCKKKVWTKAASQCMFCAYVCHKKCQEKCLAETSVC). The interval 955–999 (RLSEPGTDLVEPSPKHTPNTSDNEGSDTEVCGPNSPSKRGNSTGI) is disordered. 2 positions are modified to phosphoserine: Ser-967 and Ser-980. The segment covering 988–998 (NSPSKRGNSTG) has biased composition (polar residues). The stretch at 1028–1063 (PTEERIQKLEFMLDKLQNEIDQELEHNNSLVREEKE) forms a coiled coil. Over residues 1132–1144 (SQLIDSQPFSSIS) the composition is skewed to polar residues. Residues 1132 to 1154 (SQLIDSQPFSSISDDLFGPSESV) form a disordered region.

In terms of assembly, interacts with MSN. (Microbial infection) Interacts with HIV-1 Gag polyprotein p55.

Its subcellular location is the endoplasmic reticulum membrane. In terms of biological role, molecular tethering protein that connects endoplasmic reticulum and mitochondria membranes. PDZD8-dependent endoplasmic reticulum-mitochondria membrane tethering is essential for endoplasmic reticulum-mitochondria Ca(2+) transfer. In neurons, involved in the regulation of dendritic Ca(2+) dynamics by regulating mitochondrial Ca(2+) uptake in neurons. Plays an indirect role in the regulation of cell morphology and cytoskeletal organization. May inhibit herpes simplex virus 1 infection at an early stage. The protein is PDZ domain-containing protein 8 of Homo sapiens (Human).